The chain runs to 276 residues: uncharacterized protein (276 aa).

An N-terminal signal peptide occupies residues 1-29 (MKSHVRSFKTYIRDEIIKKGGWVNAHAHA).

This sequence belongs to the metallo-dependent hydrolases superfamily.

This is an uncharacterized protein from Haemophilus influenzae (strain ATCC 51907 / DSM 11121 / KW20 / Rd).